A 319-amino-acid chain; its full sequence is N-acetyl-D-glucosamine kinase (319 aa).

Thr-14 provides a ligand contact to ATP. Asn-37 and Asp-113 together coordinate substrate. Thr-135 contributes to the ATP binding site. Substrate is bound by residues 153–155 (GWG) and Asp-160. An ATP-binding site is contributed by Ala-220.

It belongs to the eukaryotic-type N-acetylglucosamine kinase family. In terms of assembly, homodimer.

It catalyses the reaction N-acetyl-D-glucosamine + ATP = N-acetyl-D-glucosamine 6-phosphate + ADP + H(+). In terms of biological role, converts N-acetylglucosamine (GlcNAc), a major component of complex carbohydrates, into GlcNAc 6-phosphate. Also has ManNAc kinase activity. The sequence is that of N-acetyl-D-glucosamine kinase (nagk) from Dictyostelium discoideum (Social amoeba).